The chain runs to 303 residues: Putative monooxygenase p33MONOX (303 aa).

Disordered regions lie at residues 1–20, 37–56, 66–96, 156–233, and 260–283; these read MASRQPEVPALAPSGPLGKM, LEDPAPMTPPPSDMGSIPWK, HLDKTEEGAASVSSLAVTPSPATDSSDKAPV, KLQS…LQKS, and RVGEDPATFKPPKMDVPMVEGKKQ. Residue threonine 44 is modified to Phosphothreonine. The Flavin-containing monooxygenase motif signature appears at 67-77; it reads LDKTEEGAASV. Residues 76–89 are compositionally biased toward polar residues; sequence SVSSLAVTPSPATD. Positions 170–183 are enriched in low complexity; it reads ASAQSTPSSTPHAS. Position 175 is a phosphothreonine (threonine 175). At serine 183 the chain carries Phosphoserine.

This sequence belongs to the P33MONOX family. As to quaternary structure, interacts with NELFB, NOL12 and PRNP. Expressed in neuronal pyramidal cells of the hippocampus and in the neurons of the cortex.

Its subcellular location is the cytoplasm. Its function is as follows. Potential NADPH-dependent oxidoreductase. May be involved in the regulation of neuronal survival, differentiation and axonal outgrowth. The protein is Putative monooxygenase p33MONOX (P33monox) of Mus musculus (Mouse).